We begin with the raw amino-acid sequence, 106 residues long: uncharacterized protein (106 aa).

A disordered region spans residues 1 to 46; it reads MPQGGTPCRRARRAVRPERPTSPEGVFCVGGGAPGGPPDTTNTVSA.

This is an uncharacterized protein from Gracula (BFDV).